The following is an 88-amino-acid chain: Small ribosomal subunit protein uS17 (88 aa).

It belongs to the universal ribosomal protein uS17 family. In terms of assembly, part of the 30S ribosomal subunit.

Its function is as follows. One of the primary rRNA binding proteins, it binds specifically to the 5'-end of 16S ribosomal RNA. The polypeptide is Small ribosomal subunit protein uS17 (Prochlorococcus marinus (strain SARG / CCMP1375 / SS120)).